We begin with the raw amino-acid sequence, 453 residues long: Alpha-galacturonidase (453 aa).

11–72 (IKIAYIGGGS…SQWEYKSVDS (62 aa)) is a binding site for NAD(+). A substrate-binding site is contributed by Asn151. Cys173 provides a ligand contact to Mn(2+). His174 (proton donor) is an active-site residue. His209 is a binding site for Mn(2+).

This sequence belongs to the glycosyl hydrolase 4 family. In terms of assembly, homotetramer. NAD(+) is required as a cofactor. Requires Mn(2+) as cofactor.

The catalysed reaction is [(1-&gt;4)-alpha-D-galacturonosyl](n) + H2O = alpha-D-galacturonate + [(1-&gt;4)-alpha-D-galacturonosyl](n-1). In terms of biological role, alpha-galacturonidase able to catalyze the hydrolysis of the chromogenic substrate p-nitrophenyl-alpha-D-galacturonic acid (pNPalphaGalUA). It is probable that alpha-1,4-di-galacturonate (GalUA(2)) is the naturally occurring substrate. The protein is Alpha-galacturonidase of Thermoanaerobacter italicus (strain DSM 9252 / Ab9).